Consider the following 445-residue polypeptide: StAR-related lipid transfer protein 3 (445 aa).

At 1–51 (MSKLPGELARDLECSLPAVASLGSSLSHSQSLSSHLLPPPEKRRAISDVRR) the chain is on the cytoplasmic side. The MENTAL domain maps to 46 to 217 (ISDVRRTFCL…YSPPESFAGS (172 aa)). The chain crosses the membrane as a helical span at residues 52–72 (TFCLFVTFDLLFISLLWIIEL). The Extracellular segment spans residues 73 to 94 (NTNTGIRKNLEQEIIQYNFKTS). The helical transmembrane segment at 95–115 (FFDIFVLAFFRFSGLLLGYAV) threads the bilayer. The Cytoplasmic segment spans residues 116–120 (LRLQH). The helical transmembrane segment at 121-141 (WWVIAVTTLVSSAFLIVKVIL) threads the bilayer. At 142-148 (SELLSKG) the chain is on the extracellular side. Residues 149–169 (AFGYLLPIVSFVLAWLETWFL) form a helical membrane-spanning segment. At 170–445 (DFKVLPQEAE…QRISELGARA (276 aa)) the chain is on the cytoplasmic side. 2 short sequence motifs (FFAT) span residues 206-212 (QFYSPPE) and 207-212 (FYSPPE). Phosphoserine occurs at positions 209, 217, and 221. In terms of domain architecture, START spans 248 to 443 (VVDQILAQEE…LRQRISELGA (196 aa)).

It belongs to the STARD3 family. In terms of assembly, homodimer. Interacts (via the MENTAL domain) with STARD3NL. Interacts (via phosphorylated FFAT motif) with VAPA (via MSP domain). Interacts (via phosphorylated FFAT motif) with VAPB (via MSP domain). Interacts (via phosphorylated FFAT motif) with MOSPD2 (via MSP domain); this interaction allows enrichment of MOSPD2 around endosomes. In terms of processing, phosphorylation at Ser-209 is necessary and sufficient for the direct interaction of the phosphorylated FFAT motif with the MSP domain of MOSPD2, VAPA and VAPB and allows the tethering of two membranes that participates in the formation of ER-endosome contacts. Phosphorylation of the FFAT motif leads to conformation changes. Additional phosphorylations around the core FFAT motif (QFYSPPE) are not essential but strengthen the interaction with MOSPD2, VAPA and VAPB. Phosphorylation at Ser-209 of FFAT motif drives membrane tethering between the endoplasmic reticulum and late endosomes via interaction with VAPA and VAPB that in turn allows the efficient transport of sterol mediated by the START domain. In terms of tissue distribution, present in retina. Localizes to all neurons of macular retina and especially cone inner segments and axons (at protein level).

The protein resides in the late endosome membrane. The catalysed reaction is cholesterol(in) = cholesterol(out). In terms of biological role, sterol-binding protein that mediates cholesterol transport from the endoplasmic reticulum to endosomes. The sterol transport mechanism is triggered by phosphorylation of FFAT motif that leads to membrane tethering between the endoplasmic reticulum and late endosomes via interaction with VAPA and VAPB. Acts as a lipid transfer protein that redirects sterol to the endosome at the expense of the cell membrane and favors membrane formation inside endosomes. May also mediate cholesterol transport between other membranes, such as mitochondria membrane or cell membrane. However, such results need additional experimental evidences; probably mainly mediates cholesterol transport from the endoplasmic reticulum to endosomes. Does not activate transcriptional cholesterol sensing. Able to bind other lipids, such as lutein, a xanthophyll carotenoids that form the macular pigment of the retina. Able to bind other lipids, such as lutein, a xanthophyll carotenoids that form the macular pigment of the retina. In Macaca mulatta (Rhesus macaque), this protein is StAR-related lipid transfer protein 3.